We begin with the raw amino-acid sequence, 589 residues long: Mitogen-activated protein kinase 8 (589 aa).

Residues 18-56 are disordered; sequence RPSSSSSSSSSNNNNNNHEQPIFNSSSFSSSSNPNHSAN. Composition is skewed to low complexity over residues 20–34 and 41–56; these read SSSS…NNNN and NSSS…HSAN. The 292-residue stretch at 104–395 folds into the Protein kinase domain; sequence YQIQEVVGKG…AEDALADPYF (292 aa). ATP contacts are provided by residues 110-118 and K133; that span reads VGKGSYGVV. D230 (proton acceptor) is an active-site residue. T266 carries the phosphothreonine modification. The TXY motif lies at 266 to 268; that stretch reads TDY. Phosphotyrosine is present on Y268. A Phosphothreonine modification is found at T271. Residues 474-589 form a disordered region; it reads NQGKPGAAGG…TDKVASLHNS (116 aa).

The protein belongs to the protein kinase superfamily. CMGC Ser/Thr protein kinase family. MAP kinase subfamily. Interacts with CAM3, CAM4 and CAM7 in an calcium-dependent manner. Dually phosphorylated on Thr-266 and Tyr-268, which activates the enzyme. Autophosphorylated. As to expression, ubiquitous.

The enzyme catalyses L-seryl-[protein] + ATP = O-phospho-L-seryl-[protein] + ADP + H(+). The catalysed reaction is L-threonyl-[protein] + ATP = O-phospho-L-threonyl-[protein] + ADP + H(+). Its activity is regulated as follows. Activated by threonine and tyrosine phosphorylation. Activated by two independent mechanisms, the binding of CAMs in a calcium-dependent manner and the phosphorylation by MAP kinase kinase MKK3. Activated in response to mechanical wounding, hydrogen peroxide and jasmonic acid (JA). Functionally, MKK3-MPK8 and CAMs-MPK8 modules negatively regulates ROS accumulation through controlling expression of the RBOHD gene during wounding. The protein is Mitogen-activated protein kinase 8 (MPK8) of Arabidopsis thaliana (Mouse-ear cress).